A 405-amino-acid chain; its full sequence is 8-amino-7-oxononanoate synthase 2 (405 aa).

Arg20 contacts substrate. A pyridoxal 5'-phosphate-binding site is contributed by 116 to 117 (GY). Residue His141 coordinates substrate. The pyridoxal 5'-phosphate site is built by Ser187, His215, and Thr243. Position 246 is an N6-(pyridoxal phosphate)lysine (Lys246). Thr369 is a binding site for substrate.

The protein belongs to the class-II pyridoxal-phosphate-dependent aminotransferase family. BioF subfamily. In terms of assembly, homodimer. Requires pyridoxal 5'-phosphate as cofactor.

It catalyses the reaction 6-carboxyhexanoyl-[ACP] + L-alanine + H(+) = (8S)-8-amino-7-oxononanoate + holo-[ACP] + CO2. Its pathway is cofactor biosynthesis; biotin biosynthesis. In terms of biological role, catalyzes the decarboxylative condensation of pimeloyl-[acyl-carrier protein] and L-alanine to produce 8-amino-7-oxononanoate (AON), [acyl-carrier protein], and carbon dioxide. The chain is 8-amino-7-oxononanoate synthase 2 from Polaromonas sp. (strain JS666 / ATCC BAA-500).